We begin with the raw amino-acid sequence, 22 residues long: Unknown protein 10 (22 aa).

The sequence is that of Unknown protein 10 from Pseudotsuga menziesii (Douglas-fir).